The chain runs to 196 residues: Protease (196 aa).

Catalysis depends on residues His54, Asp70, and Cys121.

Belongs to the peptidase C5 family. As to quaternary structure, interacts with protease cofactor pVI-C; this interaction is necessary for protease activation.

The protein localises to the virion. Its subcellular location is the host nucleus. It carries out the reaction Cleaves proteins of the adenovirus and its host cell at two consensus sites: -Yaa-Xaa-Gly-Gly-|-Xaa- and -Yaa-Xaa-Gly-Xaa-|-Gly- (in which Yaa is Met, Ile or Leu, and Xaa is any amino acid).. With respect to regulation, requires DNA and protease cofactor for maximal activation. Inside nascent virions, becomes partially activated by binding to the viral DNA, allowing it to cleave the cofactor that binds to the protease and fully activates it. Actin, like the viral protease cofactor, seems to act as a cofactor in the cleavage of cytokeratin 18 and of actin itself. Cleaves viral precursor proteins (pTP, pIIIa, pVI, pVII, pVIII, and pX) inside newly assembled particles giving rise to mature virions. Protease complexed to its cofactor slides along the viral DNA to specifically locate and cleave the viral precursors. Mature virions have a weakened organization compared to the unmature virions, thereby facilitating subsequent uncoating. Without maturation, the particle lacks infectivity and is unable to uncoat. Late in adenovirus infection, in the cytoplasm, may participate in the cytoskeleton destruction. Cleaves host cell cytoskeletal keratins K7 and K18. This is Protease from Bos taurus (Bovine).